A 539-amino-acid chain; its full sequence is F-box/WD-40 repeat-containing protein At5g21040 (539 aa).

Residues 65 to 111 (STTIIDLPQALISEILNCLDPKELGLVSCVSTYLHRLASEHHAWKEF) enclose the F-box domain. WD repeat units follow at residues 160–199 (GHTE…SIAA), 201–239 (KPLG…RNLF), 255–292 (GHEG…CVKT), 294–330 (RHSD…PLAI), 334–373 (AHEG…SETS), 382–419 (PHTS…KTNR), and 433–477 (PPQR…EIER). Positions 505–539 (GRPDQCSIAAHKNPINGERNRAWHSKRRASGKAKA) are disordered. Over residues 526-539 (AWHSKRRASGKAKA) the composition is skewed to basic residues.

This Arabidopsis thaliana (Mouse-ear cress) protein is F-box/WD-40 repeat-containing protein At5g21040.